A 465-amino-acid polypeptide reads, in one-letter code: Serine hydroxymethyltransferase (465 aa).

Lysine 241 is modified (N6-(pyridoxal phosphate)lysine).

The protein belongs to the SHMT family. In terms of assembly, homotetramer. It depends on pyridoxal 5'-phosphate as a cofactor. In terms of tissue distribution, highest expression in the ovary and testis. 6- to 7-fold lower expression in hemocyte, silk gland, midgut and fat body.

The catalysed reaction is (6R)-5,10-methylene-5,6,7,8-tetrahydrofolate + glycine + H2O = (6S)-5,6,7,8-tetrahydrofolate + L-serine. It functions in the pathway one-carbon metabolism; tetrahydrofolate interconversion. Its function is as follows. Interconversion of serine and glycine. This is Serine hydroxymethyltransferase (692975) from Bombyx mori (Silk moth).